An 864-amino-acid chain; its full sequence is Leucine--tRNA ligase (864 aa).

The 'HIGH' region motif lies at 42 to 52; that stretch reads PYPSGKLHMGH. The 'KMSKS' region signature appears at 624-628; sequence KMSKS. K627 is an ATP binding site.

It belongs to the class-I aminoacyl-tRNA synthetase family.

It is found in the cytoplasm. The enzyme catalyses tRNA(Leu) + L-leucine + ATP = L-leucyl-tRNA(Leu) + AMP + diphosphate. This chain is Leucine--tRNA ligase, found in Burkholderia pseudomallei (strain 668).